A 191-amino-acid polypeptide reads, in one-letter code: dCTP deaminase, dUMP-forming (191 aa).

DCTP-binding positions include 101–106 (KSSLGR), Asp-119, 127–129 (TLE), Gln-148, Tyr-162, and Gln-174. Glu-129 functions as the Proton donor/acceptor in the catalytic mechanism. The interval 163–191 (GSAKYGSRYQGQRGPTPSRSYQNFHRTPI) is disordered. Residues 171–191 (YQGQRGPTPSRSYQNFHRTPI) are compositionally biased toward polar residues.

Belongs to the dCTP deaminase family. In terms of assembly, homotrimer.

It catalyses the reaction dCTP + 2 H2O = dUMP + NH4(+) + diphosphate. It functions in the pathway pyrimidine metabolism; dUMP biosynthesis; dUMP from dCTP: step 1/1. Functionally, bifunctional enzyme that catalyzes both the deamination of dCTP to dUTP and the hydrolysis of dUTP to dUMP without releasing the toxic dUTP intermediate. This chain is dCTP deaminase, dUMP-forming, found in Nocardioides sp. (strain ATCC BAA-499 / JS614).